A 154-amino-acid polypeptide reads, in one-letter code: Cell cycle regulator of non-homologous end joining (154 aa).

The residue at position 1 (Met1) is an N-acetylmethionine. The short motif at 1–21 is the KBM element; sequence METLKSENKKRVLPSWMTAPV. A disordered region spans residues 77–144; it reads EEPTLVAPDK…RSPEEEEEDA (68 aa). Residues 95–105 show a composition bias toward low complexity; sequence ASPHTSSPGSS. The XLM signature appears at 144–154; that stretch reads ALKYVREIFFS.

As to quaternary structure, interacts (via KBM motif) with XRCC5/Ku80 and XRCC6/Ku70 heterodimer. Interacts (via XLF motif) with TRIM28/KAP1, ATM, MRE11, NBN and RAD50. Interacts with splicing factor SF3B1. Interacts with ERCC6L2; this interaction is DNA independent.

The protein localises to the cytoplasm. Its subcellular location is the nucleus. It is found in the chromosome. Cell-cycle-specific regulator of classical non-homologous end joining (NHEJ) of DNA double-strand break (DSB) repair, which can act both as an activator or inhibitor of NHEJ, depending on the cell cycle phase. Acts as a regulator of DNA repair pathway choice by specifically inhibiting classical NHEJ during the S and G2 phases, thereby promoting error-free repair by homologous recombination during cell cycle phases when sister chromatids are present. Preferentially protects single-stranded overhangs at break sites by inhibiting classical NHEJ, thereby creating a local environment that favors homologous recombination. Acts via interaction with XRCC5/Ku80 and XRCC6/Ku70. In contrast, acts as an activator of NHEJ during G1 phase of the cell cycle: promotes classical NHEJ in G1 phase cells via multivalent interactions that increase the affinity of DNA damage response proteins for DSB-associated chromatin. Also involved in immunoglobulin V(D)J recombination. May act as a regulator of proteasome. In case of infection by a retrovirus, may regulate the proteasome during the uncoating phase of retrovirus. The sequence is that of Cell cycle regulator of non-homologous end joining from Cricetulus griseus (Chinese hamster).